A 345-amino-acid chain; its full sequence is Ferrochelatase (345 aa).

Fe cation-binding residues include H215 and E296.

This sequence belongs to the ferrochelatase family.

It is found in the cytoplasm. It catalyses the reaction heme b + 2 H(+) = protoporphyrin IX + Fe(2+). Its pathway is porphyrin-containing compound metabolism; protoheme biosynthesis; protoheme from protoporphyrin-IX: step 1/1. In terms of biological role, catalyzes the ferrous insertion into protoporphyrin IX. The polypeptide is Ferrochelatase (Rhodopseudomonas palustris (strain HaA2)).